The following is a 1031-amino-acid chain: Zinc finger protein 445 (1031 aa).

A disordered region spans residues methionine 1–proline 43. Residues serine 17 to glutamate 29 are compositionally biased toward basic and acidic residues. Lysine 28 participates in a covalent cross-link: Glycyl lysine isopeptide (Lys-Gly) (interchain with G-Cter in SUMO1). One can recognise an SCAN box domain in the interval arginine 55–leucine 137. The KRAB domain maps to methionine 234–asparagine 304. Glycyl lysine isopeptide (Lys-Gly) (interchain with G-Cter in SUMO2) cross-links involve residues lysine 317, lysine 374, lysine 375, and lysine 399. 3 consecutive C2H2-type zinc fingers follow at residues phenylalanine 485–histidine 507, phenylalanine 513–histidine 535, and tyrosine 541–histidine 563. A Glycyl lysine isopeptide (Lys-Gly) (interchain with G-Cter in SUMO2) cross-link involves residue lysine 567. 2 C2H2-type zinc fingers span residues phenylalanine 597–histidine 619 and tyrosine 625–histidine 647. A Glycyl lysine isopeptide (Lys-Gly) (interchain with G-Cter in SUMO2) cross-link involves residue lysine 654. 2 C2H2-type zinc fingers span residues phenylalanine 681–histidine 703 and tyrosine 709–histidine 731. Glycyl lysine isopeptide (Lys-Gly) (interchain with G-Cter in SUMO2) cross-links involve residues lysine 736 and lysine 758. 5 consecutive C2H2-type zinc fingers follow at residues tyrosine 762–histidine 784, tyrosine 790–histidine 812, phenylalanine 840–histidine 862, tyrosine 868–histidine 890, and phenylalanine 896–histidine 918. A disordered region spans residues leucine 911 to leucine 939. Residues lysine 938, lysine 956, and lysine 975 each participate in a glycyl lysine isopeptide (Lys-Gly) (interchain with G-Cter in SUMO2) cross-link. C2H2-type zinc fingers lie at residues histidine 978 to histidine 1000 and phenylalanine 1006 to histidine 1028.

This sequence belongs to the krueppel C2H2-type zinc-finger protein family.

It localises to the nucleus. Its function is as follows. Transcription regulator required to maintain maternal and paternal gene imprinting, a process by which gene expression is restricted in a parent of origin-specific manner by epigenetic modification of genomic DNA and chromatin, including DNA methylation. Acts by controlling DNA methylation during the earliest multicellular stages of development at multiple imprinting control regions (ICRs). Acts together with ZFP57, but seems to be the major factor in human early embryonic imprinting maintenance. In contrast, in mice, ZFP57 plays the predominant role in imprinting maintenance. The chain is Zinc finger protein 445 from Homo sapiens (Human).